The primary structure comprises 752 residues: Cation-transporting P-type ATPase B (752 aa).

Residues 15–78 enclose the HMA domain; the sequence is RRIRLDVSGM…VVEKAGYHAA (64 aa). 2 residues coordinate a metal cation: C26 and C29. 6 helical membrane-spanning segments follow: residues 105–125, 132–152, 167–187, 201–221, 361–381, and 390–410; these read LLVA…FAIV, GWGY…AWPF, METL…SSVF, AILN…VFVL, IAGV…AAWL, and AFSV…GLAT. D446 (4-aspartylphosphate intermediate) is an active-site residue. The chain crosses the membrane as a helical span at residues 714-734; the sequence is AIPIAAAGLLNPLIAGAAMAF.

Belongs to the cation transport ATPase (P-type) (TC 3.A.3) family. Type IB subfamily.

It localises to the cell membrane. It catalyses the reaction ATP + H2O = ADP + phosphate + H(+). This is Cation-transporting P-type ATPase B (ctpB) from Mycobacterium bovis (strain ATCC BAA-935 / AF2122/97).